Reading from the N-terminus, the 232-residue chain is Histone H1A (232 aa).

The span at 1-18 (MSDPAVEVTPAVPVASPA) shows a compositional bias: low complexity. Disordered stretches follow at residues 1–42 (MSDP…THLP) and 98–232 (LQTK…AKKA). The region spanning 39–113 (THLPVSDMVV…GASGSFKLPA (75 aa)) is the H15 domain. Basic residues-rich tracts occupy residues 131–141 (KPKKAAAPKPK), 147–173 (KVKKTIAKKPKAATATKIKKPVAKTTK), 181–214 (AAKKAAPKPKAAPKPKAAKKETKPKKAAAPKAKK), and 222–232 (KAAKKPAAKKA).

The protein belongs to the histone H1/H5 family.

The protein localises to the nucleus. The protein resides in the chromosome. Functionally, histones H1 are necessary for the condensation of nucleosome chains into higher-order structures. The sequence is that of Histone H1A from Chironomus tentans (Midge).